The primary structure comprises 315 residues: MNAVTNGESREILLVAHPGRRDITETAKRVGKIFERAGIGLRVLVDEADSSRIEAMTEPEGFSAPGLDVTVVHPGPDAAVGCELVLVLGGDGTFLRAAELAQEASIPVLGINLGRIGFLAETEAEHLDEALAQVVRKEYRVESRMTLDVVIRVDDEIIDRGWALNEASIENRSRLGVLEVVLEVDGRPVSAFGCDGVLVSTPTGSTAYAFSAGGPVVWPELEALLVVPSNAHALFARPLVTSPNSIIAVETVAGSHDGLVFCDGRRTLELPAGARVEIVRGATPVKWVRLDSAPFADRMVRKFELPVTGWRGRKP.

Aspartate 91 serves as the catalytic Proton acceptor. NAD(+) contacts are provided by residues 91–92 (DG), arginine 96, 165–166 (NE), aspartate 195, and 206–211 (TAYAFS).

Belongs to the NAD kinase family. A divalent metal cation is required as a cofactor.

The protein resides in the cytoplasm. It catalyses the reaction NAD(+) + ATP = ADP + NADP(+) + H(+). Functionally, involved in the regulation of the intracellular balance of NAD and NADP, and is a key enzyme in the biosynthesis of NADP. Catalyzes specifically the phosphorylation on 2'-hydroxyl of the adenosine moiety of NAD to yield NADP. This chain is NAD kinase, found in Rhodococcus erythropolis (strain PR4 / NBRC 100887).